Here is a 609-residue protein sequence, read N- to C-terminus: 2',5'-phosphodiesterase 12 (609 aa).

The N-terminal 16 residues, 1–16 (MWRLPGVRAALRGVRT), are a transit peptide targeting the mitochondrion. The tract at residues 203-231 (PRAAEPEGGGPSSSSPSSPSPGWTETGVD) is disordered. Residues 214-224 (SSSSPSSPSPG) are compositionally biased toward low complexity. The residue at position 217 (Ser-217) is a Phosphoserine. Mg(2+)-binding residues include Glu-351, Asp-496, and Asn-498. Asp-496 functions as the Proton donor/acceptor in the catalytic mechanism.

This sequence belongs to the CCR4/nocturin family. Requires Mg(2+) as cofactor. In terms of tissue distribution, liver.

Its subcellular location is the mitochondrion matrix. It catalyses the reaction Exonucleolytic cleavage of poly(A) to 5'-AMP.. Its function is as follows. Enzyme that cleaves 2',5'-phosphodiester bond linking adenosines of the 5'-triphosphorylated oligoadenylates, triphosphorylated oligoadenylates referred as 2-5A modulates the 2-5A system. Degrades triphosphorylated 2-5A to produce AMP and ATP. Also cleaves 3',5'-phosphodiester bond of oligoadenylates. Plays a role as a negative regulator of the 2-5A system that is one of the major pathways for antiviral and antitumor functions induced by interferons (IFNs). Suppression of this enzyme increases cellular 2-5A levels and decreases viral replication in cultured small-airway epithelial cells. In Bos taurus (Bovine), this protein is 2',5'-phosphodiesterase 12 (PDE12).